Reading from the N-terminus, the 571-residue chain is MAKISRQAYAEMFGPTTGDRLRLADTGLIIEIEKDFTIYGEEVKFGGGKVIRDGMGQSQRMASDCVDTVITNALIVDHWGIVKADIGLKGGRIAAIGKAGNPDIQPGVTIVVGPGTEVIAGEGMIVTAGGIDSHIHFICPQQIEEALMSGVTTMIGGGTGPATGTFATTVTPGPWYMERMLQAADAYPMNIGLLGKGNASQQGPLLEQVEAGAIGLKLHEDWGTTPAAIDTCLSVADATDTQVAIHTDTLNEAGFVEATIAAFKGRTIHTYHTEGAGGGHAPDIIKVCGEANVLPSSTNPTRPYTVNTLDEHLDMLMVCHHLDPSIAEDIAFAESRIRRETIAAEDILHDLGAFSMISSDSQAMGRVGEVIIRTWQTAHKMALQRGKLPGDPNDARGGHDNFRVKRYVAKYTINPALTHGIAHEVGSVEVGKWADLVLWRPAFFGVKPSLILKGGMIAAAAMGDPNASIPTPQPVHYRPMFASAGGALHRSSLTFVSQAALAAGIGERYGLAKTLSAVRGTRTVSKRDMVHNDWQPHVTVDPETYQVVADGQLLTCEPATELPMAQRYFLF.

The Urease domain occupies 129 to 571 (GGIDSHIHFI…LPMAQRYFLF (443 aa)). Ni(2+) contacts are provided by His-134, His-136, and Lys-217. An N6-carboxylysine modification is found at Lys-217. A substrate-binding site is contributed by His-219. His-246 and His-272 together coordinate Ni(2+). His-320 (proton donor) is an active-site residue. Asp-360 serves as a coordination point for Ni(2+).

The protein belongs to the metallo-dependent hydrolases superfamily. Urease alpha subunit family. In terms of assembly, heterotrimer of UreA (gamma), UreB (beta) and UreC (alpha) subunits. Three heterotrimers associate to form the active enzyme. Requires Ni cation as cofactor. In terms of processing, carboxylation allows a single lysine to coordinate two nickel ions.

It is found in the cytoplasm. The enzyme catalyses urea + 2 H2O + H(+) = hydrogencarbonate + 2 NH4(+). It functions in the pathway nitrogen metabolism; urea degradation; CO(2) and NH(3) from urea (urease route): step 1/1. This chain is Urease subunit alpha, found in Cupriavidus necator (strain ATCC 17699 / DSM 428 / KCTC 22496 / NCIMB 10442 / H16 / Stanier 337) (Ralstonia eutropha).